A 421-amino-acid chain; its full sequence is 3-isopropylmalate dehydratase large subunit (421 aa).

Residues cysteine 292, cysteine 352, and cysteine 355 each coordinate [4Fe-4S] cluster.

This sequence belongs to the aconitase/IPM isomerase family. LeuC type 2 subfamily. Heterodimer of LeuC and LeuD. It depends on [4Fe-4S] cluster as a cofactor.

The catalysed reaction is (2R,3S)-3-isopropylmalate = (2S)-2-isopropylmalate. Its pathway is amino-acid biosynthesis; L-leucine biosynthesis; L-leucine from 3-methyl-2-oxobutanoate: step 2/4. Its function is as follows. Catalyzes the isomerization between 2-isopropylmalate and 3-isopropylmalate, via the formation of 2-isopropylmaleate. This chain is 3-isopropylmalate dehydratase large subunit, found in Herpetosiphon aurantiacus (strain ATCC 23779 / DSM 785 / 114-95).